A 509-amino-acid chain; its full sequence is Sperm-associated antigen 6 (509 aa).

ARM repeat units lie at residues 31-70 (PQNI…RLAN), 73-112 (DDLA…AVGK), 115-154 (PQLA…YIAR), 157-196 (AELS…DIAK), 199-238 (PELA…QVSK), 241-280 (VDLA…EIAK), 325-365 (ENLA…QIGR), and 368-409 (PEHA…NILQ).

In terms of assembly, interacts with SPAG16 and SPAG17. In terms of tissue distribution, highly expressed in testis.

The protein resides in the cytoplasm. It localises to the cytoskeleton. Its subcellular location is the cell projection. The protein localises to the cilium. It is found in the flagellum. The protein resides in the cilium axoneme. Important for structural integrity of the central apparatus in the sperm tail and for flagellar motility. The polypeptide is Sperm-associated antigen 6 (SPAG6) (Homo sapiens (Human)).